The chain runs to 58 residues: Microcin J25 (58 aa).

The propeptide occupies 1–37 (MIKHFHFNKLSSGKKNNVPSPAKGVIQIKKSASQLTK). The isoglutamyl glycine isopeptide (Gly-Glu) cross-link spans 38 to 45 (GGAGHVPE).

Its subcellular location is the secreted. In terms of biological role, peptide antibiotic that functions through inhibition of the bacterial DNA-dependent RNA polymerase (RNAP). Inhibits transcription by binding deep within RNAP secondary channel, where it sterically blocks the folding of the trigger loop, which is essential for efficient catalysis. In addition, it also seems to restrict access of nucleotide substrates to the catalytic center, and shows a partially competitive mode of inhibition with them. Exhibits potent bacteriocidal activity against a range of Enterobacteriaceae, including several pathogenic E.coli, Salmonella and Shigella strains. Also acts on the cytoplasmic membrane of Salmonella newport, producing alteration of membrane permeability and disruption of the subsequent gradient dissipation, which inhibits several processes essential for cell viability, such as oxygen consumption. Induces bacterial filamentation in susceptible cells in a non-SOS-dependent way, but this phenotype may result from impaired transcription of genes coding for cell division proteins. This Escherichia coli protein is Microcin J25 (mcjA).